We begin with the raw amino-acid sequence, 171 residues long: Large ribosomal subunit protein uL22 (171 aa).

The protein belongs to the universal ribosomal protein uL22 family.

The polypeptide is Large ribosomal subunit protein uL22 (RPL17) (Zea mays (Maize)).